The primary structure comprises 403 residues: Spindle assembly abnormal protein 5 (403 aa).

Disordered regions lie at residues 24–79 and 96–127; these read PRVF…AHPA and TVEG…ENWR. The span at 116 to 127 shows a compositional bias: basic and acidic residues; the sequence is RMTEENQEENWR. A coiled-coil region spans residues 128–163; sequence DVMKNEFEVMRKEMQEEATKKQEELNAQNLNKMQEM. Disordered regions lie at residues 174–205, 255–276, 302–325, and 355–403; these read AKPS…ANKI, AYSP…SSGN, RQWT…PDPQ, and YHVE…SRRK. The segment covering 177 to 194 has biased composition (basic and acidic residues); the sequence is SAEESQDREKENWYEQSR. Residues 305 to 321 show a composition bias toward basic and acidic residues; that stretch reads TSERNDNRTHDNYRPYE. Positions 360–369 are enriched in acidic residues; the sequence is VPEYEEEETE. Basic and acidic residues predominate over residues 379 to 403; it reads YHEPMETESAAERERRIREKYSRRK.

In terms of assembly, interacts with sas-6 via its coiled coil domain.

It is found in the cytoplasm. The protein resides in the cytoskeleton. It localises to the microtubule organizing center. Its subcellular location is the centrosome. The protein localises to the centriole. Its function is as follows. Required for centrosome duplication. Essential for daughter-centriole formation. Requires both maternal and partenal expression, suggesting that it regulates centriole duplication during both spermatogenesis and early embryogenesis. This Caenorhabditis briggsae protein is Spindle assembly abnormal protein 5 (sas-5).